The sequence spans 487 residues: V-type proton ATPase subunit B2 (487 aa).

N-acetylglycine is present on Gly2.

Belongs to the ATPase alpha/beta chains family. In terms of assembly, V-ATPase is a heteromultimeric enzyme composed of a peripheral catalytic V1 complex (components A to H) attached to an integral membrane V0 proton pore complex (components: a, c, c'', d and e).

Its subcellular location is the vacuole membrane. In terms of biological role, non-catalytic subunit of the peripheral V1 complex of vacuolar ATPase. V-ATPase is responsible for acidifying a variety of intracellular compartments in eukaryotic cells. This Arabidopsis thaliana (Mouse-ear cress) protein is V-type proton ATPase subunit B2 (VHA-B2).